The chain runs to 788 residues: LPS-assembly protein LptD (788 aa).

An N-terminal signal peptide occupies residues 1–23 (MSLTSRSLLATMISLALYGPAMA).

The protein belongs to the LptD family. In terms of assembly, component of the lipopolysaccharide transport and assembly complex. Interacts with LptE and LptA.

It is found in the cell outer membrane. In terms of biological role, together with LptE, is involved in the assembly of lipopolysaccharide (LPS) at the surface of the outer membrane. The protein is LPS-assembly protein LptD of Photobacterium profundum (strain SS9).